A 246-amino-acid chain; its full sequence is Carboxy-S-adenosyl-L-methionine synthase (246 aa).

Residues Y39, 64 to 66 (GCS), 89 to 90 (DN), 117 to 118 (DI), N132, and R199 each bind S-adenosyl-L-methionine.

The protein belongs to the class I-like SAM-binding methyltransferase superfamily. Cx-SAM synthase family. In terms of assembly, homodimer.

The enzyme catalyses prephenate + S-adenosyl-L-methionine = carboxy-S-adenosyl-L-methionine + 3-phenylpyruvate + H2O. In terms of biological role, catalyzes the conversion of S-adenosyl-L-methionine (SAM) to carboxy-S-adenosyl-L-methionine (Cx-SAM). The sequence is that of Carboxy-S-adenosyl-L-methionine synthase from Erwinia tasmaniensis (strain DSM 17950 / CFBP 7177 / CIP 109463 / NCPPB 4357 / Et1/99).